The following is a 633-amino-acid chain: Pesticidal crystal protein Cry2Aa (633 aa).

It belongs to the delta endotoxin family.

In terms of biological role, promotes colloidosmotic lysis by binding to the midgut epithelial cells of both dipteran (Aedes aegypti) and lepidopteran (Manduca sexta) larvae. This is Pesticidal crystal protein Cry2Aa (cry2Aa) from Bacillus thuringiensis subsp. kenyae.